A 591-amino-acid polypeptide reads, in one-letter code: V-type ATP synthase alpha chain (591 aa).

232-239 serves as a coordination point for ATP; that stretch reads GPFGAGKT.

The protein belongs to the ATPase alpha/beta chains family.

The catalysed reaction is ATP + H2O + 4 H(+)(in) = ADP + phosphate + 5 H(+)(out). In terms of biological role, produces ATP from ADP in the presence of a proton gradient across the membrane. The V-type alpha chain is a catalytic subunit. This is V-type ATP synthase alpha chain from Clostridium perfringens (strain ATCC 13124 / DSM 756 / JCM 1290 / NCIMB 6125 / NCTC 8237 / Type A).